Reading from the N-terminus, the 276-residue chain is Octanoyltransferase LipM (276 aa).

The 215-residue stretch at 33–247 (GELKPTLRFY…GFKDAFSLTF (215 aa)) folds into the BPL/LPL catalytic domain. Cysteine 150 functions as the Acyl-thioester intermediate in the catalytic mechanism.

This sequence belongs to the octanoyltransferase LipM family. In terms of assembly, monomer.

The catalysed reaction is octanoyl-[ACP] + L-lysyl-[protein] = N(6)-octanoyl-L-lysyl-[protein] + holo-[ACP] + H(+). Its pathway is protein modification; protein lipoylation via endogenous pathway; protein N(6)-(lipoyl)lysine from octanoyl-[acyl-carrier-protein]. Its function is as follows. Catalyzes the transfer of endogenously produced octanoic acid from octanoyl-acyl-carrier-protein onto the lipoyl domain of GcvH, an intermediate carrier during protein lipoylation. The protein is Octanoyltransferase LipM of Exiguobacterium sp. (strain ATCC BAA-1283 / AT1b).